Here is a 146-residue protein sequence, read N- to C-terminus: Cyanate hydratase (146 aa).

Catalysis depends on residues Arg87, Glu90, and Ser113.

This sequence belongs to the cyanase family.

It carries out the reaction cyanate + hydrogencarbonate + 3 H(+) = NH4(+) + 2 CO2. Functionally, catalyzes the reaction of cyanate with bicarbonate to produce ammonia and carbon dioxide. The protein is Cyanate hydratase of Marinomonas sp. (strain MWYL1).